The following is a 428-amino-acid chain: Threonine synthase (428 aa).

Lys107 bears the N6-(pyridoxal phosphate)lysine mark.

The protein belongs to the threonine synthase family. It depends on pyridoxal 5'-phosphate as a cofactor.

The enzyme catalyses O-phospho-L-homoserine + H2O = L-threonine + phosphate. The protein operates within amino-acid biosynthesis; L-threonine biosynthesis; L-threonine from L-aspartate: step 5/5. Is competitively inhibited by L-threo-3-hydroxyhomoserine phosphate. In terms of biological role, catalyzes the gamma-elimination of phosphate from L-phosphohomoserine and the beta-addition of water to produce L-threonine. To a lesser extent, is able to slowly catalyze the deamination of L-threonine into alpha-ketobutyrate and that of L-serine and 3-chloroalanine into pyruvate. Is also able to rapidly convert vinylglycine to threonine, which proves that the pyridoxal p-quinonoid of vinylglycine is an intermediate in the TS reaction. The polypeptide is Threonine synthase (thrC) (Escherichia coli (strain K12)).